Consider the following 212-residue polypeptide: MNIFRFLGDISHLSAIFILLLKIWKSRSCAGISGKSQLLFAIVFTARYLDLFTNYISFYNTSMKVVYVASSYATVWMIYSKFKATYDGNHDTFRVEFLIVPTAILAFLVNHDFTPLEIFWTFSIYLESVAILPQLFMVSKTGEAETITSHYLFALGIYRTLYLFNWIWRYQFEGFFDLIAIVAGLVQTVLYCDFFYLYVTKVLKGKKLSLPA.

Residues 1 to 4 (MNIF) lie on the Lumenal side of the membrane. The helical transmembrane segment at 5–24 (RFLGDISHLSAIFILLLKIW) threads the bilayer. The Cytoplasmic portion of the chain corresponds to 25–32 (KSRSCAGI). The chain crosses the membrane as a helical span at residues 33-52 (SGKSQLLFAIVFTARYLDLF). The segment at 47–48 (RY) is interaction with the K-D-E-L motif on target proteins. Residues 53-58 (TNYISF) lie on the Lumenal side of the membrane. Residues 59–79 (YNTSMKVVYVASSYATVWMIY) form a helical membrane-spanning segment. The Cytoplasmic segment spans residues 80-92 (SKFKATYDGNHDT). The helical transmembrane segment at 93–110 (FRVEFLIVPTAILAFLVN) threads the bilayer. Residues 111–116 (HDFTPL) are Lumenal-facing. The helical transmembrane segment at 117 to 135 (EIFWTFSIYLESVAILPQL) threads the bilayer. Over 136–149 (FMVSKTGEAETITS) the chain is Cytoplasmic. Residues 150–168 (HYLFALGIYRTLYLFNWIW) traverse the membrane as a helical segment. The interaction with the K-D-E-L motif on target proteins stretch occupies residues 159–169 (RTLYLFNWIWR). Residues 169–178 (RYQFEGFFDL) lie on the Lumenal side of the membrane. Residues 179-199 (IAIVAGLVQTVLYCDFFYLYV) form a helical membrane-spanning segment. Residues 200-212 (TKVLKGKKLSLPA) are Cytoplasmic-facing. The important for recycling of cargo proteins with the sequence motif K-D-E-L from the Golgi to the endoplasmic reticulum stretch occupies residues 204 to 207 (KGKK).

Belongs to the ERD2 family.

The protein resides in the golgi apparatus membrane. It is found in the cytoplasmic vesicle. It localises to the COPI-coated vesicle membrane. Its subcellular location is the endoplasmic reticulum membrane. The protein localises to the endoplasmic reticulum-Golgi intermediate compartment membrane. Functionally, receptor for the C-terminal sequence motif K-D-E-L that is present on endoplasmic reticulum resident proteins and that mediates their recycling from the Golgi back to the endoplasmic reticulum. The chain is ER lumen protein-retaining receptor 1-A (kdelr1-a) from Xenopus laevis (African clawed frog).